Consider the following 1213-residue polypeptide: DNA-directed RNA polymerase subunit beta' (1213 aa).

Positions 60, 62, 75, and 78 each coordinate Zn(2+). The Mg(2+) site is built by Asp-450, Asp-452, and Asp-454. Positions 819, 893, 900, and 903 each coordinate Zn(2+).

It belongs to the RNA polymerase beta' chain family. The RNAP catalytic core consists of 2 alpha, 1 beta, 1 beta' and 1 omega subunit. When a sigma factor is associated with the core the holoenzyme is formed, which can initiate transcription. The cofactor is Mg(2+). Requires Zn(2+) as cofactor.

It carries out the reaction RNA(n) + a ribonucleoside 5'-triphosphate = RNA(n+1) + diphosphate. Its function is as follows. DNA-dependent RNA polymerase catalyzes the transcription of DNA into RNA using the four ribonucleoside triphosphates as substrates. The sequence is that of DNA-directed RNA polymerase subunit beta' from Streptococcus pyogenes serotype M2 (strain MGAS10270).